The primary structure comprises 534 residues: Bifunctional pantoate ligase/cytidylate kinase (534 aa).

A pantoate--beta-alanine ligase region spans residues 1-302 (MRLLTTVAAL…LGSTRLIDNT (302 aa)). 48-55 (MGSLHQGH) serves as a coordination point for ATP. The Proton donor role is filled by His-55. A (R)-pantoate-binding site is contributed by Gln-79. Gln-79 lines the beta-alanine pocket. An ATP-binding site is contributed by 172-175 (GQKD). A (R)-pantoate-binding site is contributed by Gln-178. ATP contacts are provided by residues Val-201 and 209 to 212 (CSSR). The segment at 303-534 (ILRDRQPIIA…DYYQQRLSQW (232 aa)) is cytidylate kinase.

In the N-terminal section; belongs to the pantothenate synthetase family. This sequence in the C-terminal section; belongs to the cytidylate kinase family. Type 1 subfamily.

The protein localises to the cytoplasm. It catalyses the reaction (R)-pantoate + beta-alanine + ATP = (R)-pantothenate + AMP + diphosphate + H(+). The enzyme catalyses CMP + ATP = CDP + ADP. It carries out the reaction dCMP + ATP = dCDP + ADP. Its pathway is cofactor biosynthesis; (R)-pantothenate biosynthesis; (R)-pantothenate from (R)-pantoate and beta-alanine: step 1/1. Its function is as follows. Catalyzes the condensation of pantoate with beta-alanine in an ATP-dependent reaction via a pantoyl-adenylate intermediate. Catalyzes the transfer of a phosphate group from ATP to either CMP or dCMP to form CDP or dCDP and ADP, respectively. This is Bifunctional pantoate ligase/cytidylate kinase from Trichormus variabilis (strain ATCC 29413 / PCC 7937) (Anabaena variabilis).